The primary structure comprises 466 residues: MTHDGTWSDESDWEAVEFELDEAAQAPPAPVVAVVGRPNVGKSTLVNRILGRREAVVQDVPGVTRDRVSYDALWTGRRFVVQDTGGWEPDAKGLQQLVAEQASVAMRTADAVILVVDALVGATTADEAAARILLRSGKPVFLAANKVDSDKAEADAAMLWSLGLGEPHPISAMHGRGVADLLDEVLAALPEVSEVAPRPGGPRRVALVGKPNVGKSSLLNKLAGDQRSVVHDVAGTTVDPVDSLIELGDRVWRFVDTAGLRRKVGQASGHEFYASVRTHSAIDAAEVVIVLIDASAPLTEQDQRVLSMVIEAGRALVLAFNKWDLVDEDRRELLEREIDRELVQLRWAPRVNISAKTGRAVAKLVPAMETALASWDTRIATGPLNSWLKEVVAATPPPVRGGKQPRILFATQAAARPPTFVLFTTGFLEAGYRRFLERRLREAFGFEGTPIRINVRVREKRGARRR.

EngA-type G domains are found at residues 30–193 (PVVA…PEVS) and 203–376 (RRVA…ASWD). GTP is bound by residues 36–43 (GRPNVGKS), 83–87 (DTGGW), 145–148 (NKVD), 209–216 (GKPNVGKS), 256–260 (DTAGL), and 321–324 (NKWD). The KH-like domain occupies 377–459 (TRIATGPLNS…PIRINVRVRE (83 aa)).

Belongs to the TRAFAC class TrmE-Era-EngA-EngB-Septin-like GTPase superfamily. EngA (Der) GTPase family. Associates with the 50S ribosomal subunit.

GTPase that plays an essential role in the late steps of ribosome biogenesis. This is GTPase Der from Mycobacterium avium (strain 104).